The primary structure comprises 308 residues: Ribosomal protein L11 methyltransferase (308 aa).

Residues Thr-157, Gly-178, Asp-200, and Asn-243 each coordinate S-adenosyl-L-methionine.

The protein belongs to the methyltransferase superfamily. PrmA family.

Its subcellular location is the cytoplasm. The enzyme catalyses L-lysyl-[protein] + 3 S-adenosyl-L-methionine = N(6),N(6),N(6)-trimethyl-L-lysyl-[protein] + 3 S-adenosyl-L-homocysteine + 3 H(+). In terms of biological role, methylates ribosomal protein L11. The polypeptide is Ribosomal protein L11 methyltransferase (Desulforamulus reducens (strain ATCC BAA-1160 / DSM 100696 / MI-1) (Desulfotomaculum reducens)).